We begin with the raw amino-acid sequence, 270 residues long: Glutamate racemase (270 aa).

Substrate-binding positions include 14-15 (DS) and 46-47 (YG). Cys77 (proton donor/acceptor) is an active-site residue. 78 to 79 (NT) is a binding site for substrate. The Proton donor/acceptor role is filled by Cys189. 190–191 (TH) is a binding site for substrate.

This sequence belongs to the aspartate/glutamate racemases family.

It catalyses the reaction L-glutamate = D-glutamate. It participates in cell wall biogenesis; peptidoglycan biosynthesis. Functionally, provides the (R)-glutamate required for cell wall biosynthesis. The sequence is that of Glutamate racemase from Neisseria meningitidis serogroup C.